The following is a 268-amino-acid chain: Mediator of RNA polymerase II transcription subunit 8 (268 aa).

Residues 1-28 adopt a coiled-coil conformation; sequence MQREEKQLEASLDALLSQVADLKNSLGS. Ser-82 carries the phosphoserine modification. A coiled-coil region spans residues 133–163; sequence ADAAQKQIQSLNKMCSNLLEKISKEERESES. The interaction with the Elongin BC complex stretch occupies residues 142–151; the sequence is SLNKMCSNLL. Disordered regions lie at residues 156 to 176 and 193 to 268; these read KEER…FNPT and NWRP…PYQR. Over residues 200–209 the composition is skewed to gly residues; it reads SGPGQAGQPG. Over residues 218-235 the composition is skewed to polar residues; it reads SGLQQVQMAGAPSQQQPM.

Belongs to the Mediator complex subunit 8 family. As to quaternary structure, component of the Mediator complex, which is composed of MED1, MED4, MED6, MED7, MED8, MED9, MED10, MED11, MED12, MED13, MED13L, MED14, MED15, MED16, MED17, MED18, MED19, MED20, MED21, MED22, MED23, MED24, MED25, MED26, MED27, MED29, MED30, MED31, CCNC, CDK8 and CDC2L6/CDK11. The MED12, MED13, CCNC and CDK8 subunits form a distinct module termed the CDK8 module. Mediator containing the CDK8 module is less active than Mediator lacking this module in supporting transcriptional activation. Individual preparations of the Mediator complex lacking one or more distinct subunits have been variously termed ARC, CRSP, DRIP, PC2, SMCC and TRAP. May be part of a multisubunit E3 ubiquitin-protein ligase complex with the elongin BC complex (ELOB and ELOC), CUL2 and RBX1.

The protein resides in the nucleus. Its pathway is protein modification; protein ubiquitination. Functionally, component of the Mediator complex, a coactivator involved in the regulated transcription of nearly all RNA polymerase II-dependent genes. Mediator functions as a bridge to convey information from gene-specific regulatory proteins to the basal RNA polymerase II transcription machinery. Mediator is recruited to promoters by direct interactions with regulatory proteins and serves as a scaffold for the assembly of a functional preinitiation complex with RNA polymerase II and the general transcription factors. May play a role as a target recruitment subunit in E3 ubiquitin-protein ligase complexes and thus in ubiquitination and subsequent proteasomal degradation of target proteins. This chain is Mediator of RNA polymerase II transcription subunit 8 (MED8), found in Homo sapiens (Human).